Here is an 89-residue protein sequence, read N- to C-terminus: uncharacterized protein (89 aa).

3 helical membrane-spanning segments follow: residues 5 to 25 (AYLV…KRKA), 36 to 56 (RLWL…MQTF), and 67 to 87 (YGVP…YSPF).

The protein resides in the cell membrane. This is an uncharacterized protein from Bacillus subtilis (strain 168).